Consider the following 436-residue polypeptide: Chromosomal replication initiator protein DnaA (436 aa).

The segment at M1 to T69 is domain I, interacts with DnaA modulators. The segment at T69–T99 is domain II. A domain III, AAA+ region region spans residues L100–A314. Residues G144, G146, K147, and T148 each contribute to the ATP site. The tract at residues N315 to G436 is domain IV, binds dsDNA.

It belongs to the DnaA family. As to quaternary structure, oligomerizes as a right-handed, spiral filament on DNA at oriC.

It is found in the cytoplasm. Functionally, plays an essential role in the initiation and regulation of chromosomal replication. ATP-DnaA binds to the origin of replication (oriC) to initiate formation of the DNA replication initiation complex once per cell cycle. Binds the DnaA box (a 9 base pair repeat at the origin) and separates the double-stranded (ds)DNA. Forms a right-handed helical filament on oriC DNA; dsDNA binds to the exterior of the filament while single-stranded (ss)DNA is stabiized in the filament's interior. The ATP-DnaA-oriC complex binds and stabilizes one strand of the AT-rich DNA unwinding element (DUE), permitting loading of DNA polymerase. After initiation quickly degrades to an ADP-DnaA complex that is not apt for DNA replication. Binds acidic phospholipids. The protein is Chromosomal replication initiator protein DnaA of Campylobacter curvus (strain 525.92).